The primary structure comprises 173 residues: Sterile alpha motif domain-containing protein 5 (173 aa).

In terms of domain architecture, SAM spans 1–65 (MCTNIVYEWL…LEAVRRLREQ (65 aa)). The disordered stretch occupies residues 75–119 (TLEPQPAPPGPPADAVPTGRRGEPCGGPAQGTRGDSRGHTTAPRS). Residues 79-88 (QPAPPGPPAD) show a composition bias toward pro residues.

As to quaternary structure, interacts promiscuously (via SAM domain) with EPHA5, EPHA6, EPHA7, EPHA8, EPHB1, EPHB2, EPHB3 and EPHB4 (via SAM domain) (in vitro). In terms of tissue distribution, detected in biliary epithelial cells on bile ducts at the hepatic hilum (at protein level).

It localises to the cytoplasm. The polypeptide is Sterile alpha motif domain-containing protein 5 (SAMD5) (Homo sapiens (Human)).